We begin with the raw amino-acid sequence, 288 residues long: ATP synthase gamma chain (288 aa).

The protein belongs to the ATPase gamma chain family. As to quaternary structure, F-type ATPases have 2 components, CF(1) - the catalytic core - and CF(0) - the membrane proton channel. CF(1) has five subunits: alpha(3), beta(3), gamma(1), delta(1), epsilon(1). CF(0) has three main subunits: a, b and c.

The protein localises to the cell inner membrane. Produces ATP from ADP in the presence of a proton gradient across the membrane. The gamma chain is believed to be important in regulating ATPase activity and the flow of protons through the CF(0) complex. The sequence is that of ATP synthase gamma chain from Rickettsia prowazekii (strain Madrid E).